The primary structure comprises 312 residues: Small ribosomal subunit protein uS2m (312 aa).

The protein belongs to the universal ribosomal protein uS2 family.

Its subcellular location is the mitochondrion. The polypeptide is Small ribosomal subunit protein uS2m (RPS2) (Acanthamoeba castellanii (Amoeba)).